A 352-amino-acid chain; its full sequence is UDP-N-acetylglucosamine--N-acetylmuramyl-(pentapeptide) pyrophosphoryl-undecaprenol N-acetylglucosamine transferase (352 aa).

Residues serine 195 and glutamine 287 each coordinate UDP-N-acetyl-alpha-D-glucosamine.

This sequence belongs to the glycosyltransferase 28 family. MurG subfamily.

It localises to the cell membrane. It catalyses the reaction Mur2Ac(oyl-L-Ala-gamma-D-Glu-L-Lys-D-Ala-D-Ala)-di-trans,octa-cis-undecaprenyl diphosphate + UDP-N-acetyl-alpha-D-glucosamine = beta-D-GlcNAc-(1-&gt;4)-Mur2Ac(oyl-L-Ala-gamma-D-Glu-L-Lys-D-Ala-D-Ala)-di-trans,octa-cis-undecaprenyl diphosphate + UDP + H(+). It functions in the pathway cell wall biogenesis; peptidoglycan biosynthesis. Cell wall formation. Catalyzes the transfer of a GlcNAc subunit on undecaprenyl-pyrophosphoryl-MurNAc-pentapeptide (lipid intermediate I) to form undecaprenyl-pyrophosphoryl-MurNAc-(pentapeptide)GlcNAc (lipid intermediate II). The protein is UDP-N-acetylglucosamine--N-acetylmuramyl-(pentapeptide) pyrophosphoryl-undecaprenol N-acetylglucosamine transferase of Streptococcus pneumoniae serotype 4 (strain ATCC BAA-334 / TIGR4).